The primary structure comprises 159 residues: Ribosomal RNA large subunit methyltransferase H (159 aa).

S-adenosyl-L-methionine is bound by residues L76, G108, and 127–132 (FSKMTF).

It belongs to the RNA methyltransferase RlmH family. In terms of assembly, homodimer.

It localises to the cytoplasm. It catalyses the reaction pseudouridine(1915) in 23S rRNA + S-adenosyl-L-methionine = N(3)-methylpseudouridine(1915) in 23S rRNA + S-adenosyl-L-homocysteine + H(+). Functionally, specifically methylates the pseudouridine at position 1915 (m3Psi1915) in 23S rRNA. The polypeptide is Ribosomal RNA large subunit methyltransferase H (Clostridium botulinum (strain Alaska E43 / Type E3)).